The primary structure comprises 116 residues: UPF0298 protein EF_2453 (116 aa).

Belongs to the UPF0298 family.

It is found in the cytoplasm. The polypeptide is UPF0298 protein EF_2453 (Enterococcus faecalis (strain ATCC 700802 / V583)).